The following is a 642-amino-acid chain: Bud site selection protein 5 (642 aa).

The region spanning 224–339 is the N-terminal Ras-GEF domain; it reads EVFRIQLYLN…DIVQLFINKK (116 aa). Residues 412–640 enclose the Ras-GEF domain; that stretch reads SPWSLAKTLT…YQVSIAKVPR (229 aa).

In terms of assembly, interacts with AXL2, BEM1, GSP1 and in haploid cells with AXL1.

The protein localises to the bud neck. Its subcellular location is the cytoplasm. It is found in the cell cortex. Its function is as follows. GDP-GTP exchange factor (GEF) for the small GTPase BUD1/RSR1. Regulates the activity of BUD1 together with BUD2 which is a GTPase-activating protein (GAP) of BUD1. Required to produce both the axial and bipolar patterns of bud site selection. Determines the orientation of division axis. Overexpression can suppress mutations in PRP20 which is the GEF for GSP1. May be a cytoplasmic GEF for GSP1. Might also act on the Ras-like protein CDC42. Appears to bind to Ras proteins but not to activate them. In Saccharomyces cerevisiae (strain ATCC 204508 / S288c) (Baker's yeast), this protein is Bud site selection protein 5 (BUD5).